A 320-amino-acid chain; its full sequence is MRQTKTGILLANLGTPDAPTPEAVKRYLKQFLSDRRVVDTPRPLWWPLLRGVILPLRSPRVAKLYQSIWMDGGSPLMVYSREQQQGLAARLPDTPVALGMSYGSPSLESAVDELLASDVDHIVVLPLYPQYSCSTVGAVWDELGRILARKRRIPGISFIRDYADDGAYIDALAKSARESFARHGEPDLLLLSYHGIPQRYADEGDDYPQRCRDTTRELVSALGLPPEKVMMTFQSRFGREPWLTPYTDETLKMLGEKGTGHIQVMCPGFAADCLETLEEIAEQNREIFLEAGGKKYAYIPALNATPEHIDMMLKLTAPYR.

The Fe cation site is built by His194 and Glu275.

This sequence belongs to the ferrochelatase family. Monomer.

It is found in the cytoplasm. It carries out the reaction heme b + 2 H(+) = protoporphyrin IX + Fe(2+). Its pathway is porphyrin-containing compound metabolism; protoheme biosynthesis; protoheme from protoporphyrin-IX: step 1/1. In terms of biological role, catalyzes the ferrous insertion into protoporphyrin IX. In Salmonella arizonae (strain ATCC BAA-731 / CDC346-86 / RSK2980), this protein is Ferrochelatase.